Consider the following 230-residue polypeptide: NAD(P)H-hydrate epimerase (230 aa).

A YjeF N-terminal domain is found at 11–218 (AIDVDQELFT…ALQRKYGLNL (208 aa)). Residue 61–65 (NNGGD) participates in (6S)-NADPHX binding. The K(+) site is built by asparagine 62 and aspartate 126. (6S)-NADPHX is bound by residues 130 to 136 (GFSFKPP) and aspartate 159. Residue serine 162 coordinates K(+).

This sequence belongs to the NnrE/AIBP family. K(+) is required as a cofactor.

It catalyses the reaction (6R)-NADHX = (6S)-NADHX. The catalysed reaction is (6R)-NADPHX = (6S)-NADPHX. Its function is as follows. Catalyzes the epimerization of the S- and R-forms of NAD(P)HX, a damaged form of NAD(P)H that is a result of enzymatic or heat-dependent hydration. This is a prerequisite for the S-specific NAD(P)H-hydrate dehydratase to allow the repair of both epimers of NAD(P)HX. In Drosophila yakuba (Fruit fly), this protein is NAD(P)H-hydrate epimerase.